A 1171-amino-acid chain; its full sequence is Pyruvate:ferredoxin oxidoreductase (1171 aa).

Residues T29 and R112 each contribute to the pyruvate site. CoA is bound by residues 424–428 (SDGTV), K456, N556, and N598. 4Fe-4S ferredoxin-type domains are found at residues 677-706 (NIPQ…PYLA) and 733-764 (FRIQ…MVPL). Positions 686, 689, 692, 696, 742, 745, 748, 752, 809, and 812 each coordinate [4Fe-4S] cluster. Thiamine diphosphate contacts are provided by residues E814, C837, 967–969 (DGW), and 995–1000 (TEVYSN). Position 837 (C837) interacts with [4Fe-4S] cluster. Mg(2+)-binding residues include D967, T995, and V997. N1000 contributes to the pyruvate binding site. C1075 contributes to the [4Fe-4S] cluster binding site.

The protein belongs to the pyruvate:ferredoxin/flavodoxin oxidoreductase family. In terms of assembly, homodimer. [4Fe-4S] cluster is required as a cofactor. The cofactor is thiamine diphosphate. Requires Mg(2+) as cofactor.

The enzyme catalyses 2 oxidized [2Fe-2S]-[ferredoxin] + pyruvate + CoA = 2 reduced [2Fe-2S]-[ferredoxin] + acetyl-CoA + CO2 + H(+). Catalyzes the oxidative decarboxylation of pyruvate to acetyl-CoA and carbon dioxide. The two electrons that are generated as a result of pyruvate decarboxylation are used in the reduction of low potential ferredoxins, which provide reducing equivalents for central metabolism. Also catalyzes the reverse reaction, i.e. the synthesis of pyruvate from acetyl-CoA and carbon dioxide. Appears to function physiologically in both directions. The oxidation of pyruvate by PFOR is required to connect glycolysis and the Wood-Ljungdahl pathway of reductive acetogenesis. The conversion of acetyl-CoA to pyruvate links the Wood-Ljungdahl pathway of autotrophic CO2 fixation to the reductive tricarboxylic acid cycle. Can use methyl viologen as electron carrier in vitro. The sequence is that of Pyruvate:ferredoxin oxidoreductase from Moorella thermoacetica (strain ATCC 39073 / JCM 9320).